Consider the following 639-residue polypeptide: Chaperone protein DnaK (639 aa).

T199 carries the phosphothreonine; by autocatalysis modification. Over residues 602–613 (AQAQQAAAGAEG) the composition is skewed to low complexity. A disordered region spans residues 602–639 (AQAQQAAAGAEGQPEDASAKQDDDVVDAEFEEVKDDKK). The segment covering 625–639 (DVVDAEFEEVKDDKK) has biased composition (acidic residues).

It belongs to the heat shock protein 70 family.

Its function is as follows. Acts as a chaperone. This Pseudoalteromonas atlantica (strain T6c / ATCC BAA-1087) protein is Chaperone protein DnaK.